The chain runs to 270 residues: Protoheme IX farnesyltransferase (270 aa).

Transmembrane regions (helical) follow at residues 13-30 (LALL…LVPD), 33-53 (HATL…GSAL), 95-115 (LLVL…ALAW), 129-149 (LALA…WTLA), 156-176 (YRII…FWLF), 207-227 (LWLG…LMAP), and 249-269 (EATL…ALLL).

This sequence belongs to the UbiA prenyltransferase family. Protoheme IX farnesyltransferase subfamily.

The protein resides in the cell inner membrane. The enzyme catalyses heme b + (2E,6E)-farnesyl diphosphate + H2O = Fe(II)-heme o + diphosphate. The protein operates within porphyrin-containing compound metabolism; heme O biosynthesis; heme O from protoheme: step 1/1. Functionally, converts heme B (protoheme IX) to heme O by substitution of the vinyl group on carbon 2 of heme B porphyrin ring with a hydroxyethyl farnesyl side group. In Geobacter sulfurreducens (strain ATCC 51573 / DSM 12127 / PCA), this protein is Protoheme IX farnesyltransferase.